The following is a 1499-amino-acid chain: Condensin complex subunit 1 (1499 aa).

2 disordered regions span residues 1–43 and 1421–1499; these read MPRK…DGLS and ITKN…MLDD. The segment covering 1432-1446 has biased composition (low complexity); the sequence is PTTMSGSSRTTSRAA. Composition is skewed to acidic residues over residues 1458 to 1467 and 1486 to 1499; these read SDEDDSDSDD and ADDDSDSDEFMLDD.

The protein belongs to the CND1 (condensin subunit 1) family. In terms of assembly, component of the condensin I complex, which contains the mix-1/SMC2 and smc-4/SMC4 heterodimer, and three non SMC subunits that probably regulate the complex: dpy-26, capg-1 and dpy-28. Within the complex, interacts with dpy-26 and smc-4. Component of the dosage compensation complex, which consist of the condensin I like components mix-1/SMC2 and dpy-27/SMC4, and the three non SMC subunits dpy-26, capg-1 and dpy-28. Within the complex, interacts with mix-1, dpy-27, dpy-26 and capg-1. Interacts with smcl-1. Post-translationally, sumoylated. Sumoylated in the context of the dosage compensation complex but not in the condensin I complex. Sumoylation is important for assembly of the dosage compensation complex and its robust binding to the X chromosome. In terms of tissue distribution, expressed in somatic and germline tissues (at protein level).

It is found in the nucleus. It localises to the chromosome. Required for both chromosome condensation and segregation during mitosis and meiosis and X-chromosome dosage compensation depending on its binding partners. Regulatory subunit of the condensin I complex, a complex required for conversion of interphase chromatin into mitotic-like condense chromosomes. The condensin I complex probably introduces positive supercoils into relaxed DNA in the presence of type I topoisomerases and converts nicked DNA into positive knotted forms in the presence of type II topoisomerases. The condensin I complex function is required for proper chromosome segregation in mitosis and meiosis. As a member of the condensin I complex, further controls the crossover number and distribution in meiosis by restricting double strand break formation, possibly by influencing higher-order chromosome structure. Plays a role in robust cytokinesis upon presence of chromatin obstructions. Also a member of the condensin I-like dosage compensation complex that associates specifically with hermaphrodite X chromosomes to reduce their gene transcription during interphase, possibly through chromatin reorganization. This chain is Condensin complex subunit 1, found in Caenorhabditis elegans.